The primary structure comprises 326 residues: Phospho-N-acetylmuramoyl-pentapeptide-transferase (326 aa).

The next 10 helical transmembrane spans lie at 13–33 (ILAP…IFIP), 57–77 (GTPT…ILIM), 85–105 (EMIL…DDIL), 121–141 (MILL…NVGT), 155–175 (NLGI…TNAV), 181–201 (IDGL…IIGF), 208–228 (VAVF…FNAF), 232–252 (IFMG…IALM), 257–277 (LFVI…IIQV), and 305–325 (VKIV…GFVA).

It belongs to the glycosyltransferase 4 family. MraY subfamily. Requires Mg(2+) as cofactor.

It is found in the cell membrane. The catalysed reaction is UDP-N-acetyl-alpha-D-muramoyl-L-alanyl-gamma-D-glutamyl-meso-2,6-diaminopimeloyl-D-alanyl-D-alanine + di-trans,octa-cis-undecaprenyl phosphate = di-trans,octa-cis-undecaprenyl diphospho-N-acetyl-alpha-D-muramoyl-L-alanyl-D-glutamyl-meso-2,6-diaminopimeloyl-D-alanyl-D-alanine + UMP. Its pathway is cell wall biogenesis; peptidoglycan biosynthesis. In terms of biological role, catalyzes the initial step of the lipid cycle reactions in the biosynthesis of the cell wall peptidoglycan: transfers peptidoglycan precursor phospho-MurNAc-pentapeptide from UDP-MurNAc-pentapeptide onto the lipid carrier undecaprenyl phosphate, yielding undecaprenyl-pyrophosphoryl-MurNAc-pentapeptide, known as lipid I. This Clostridium beijerinckii (strain ATCC 51743 / NCIMB 8052) (Clostridium acetobutylicum) protein is Phospho-N-acetylmuramoyl-pentapeptide-transferase.